A 370-amino-acid chain; its full sequence is 3-isopropylmalate dehydrogenase (370 aa).

77 to 90 provides a ligand contact to NAD(+); sequence GPKWDSVPYEVRPE. 4 residues coordinate substrate: arginine 97, arginine 107, arginine 135, and aspartate 226. Mg(2+)-binding residues include aspartate 226, aspartate 250, and aspartate 254. 290–302 contacts NAD(+); sequence GSAPDIAGKGIAN.

The protein belongs to the isocitrate and isopropylmalate dehydrogenases family. LeuB type 1 subfamily. Homodimer. Requires Mg(2+) as cofactor. Mn(2+) serves as cofactor.

Its subcellular location is the cytoplasm. The enzyme catalyses (2R,3S)-3-isopropylmalate + NAD(+) = 4-methyl-2-oxopentanoate + CO2 + NADH. It functions in the pathway amino-acid biosynthesis; L-leucine biosynthesis; L-leucine from 3-methyl-2-oxobutanoate: step 3/4. Its function is as follows. Catalyzes the oxidation of 3-carboxy-2-hydroxy-4-methylpentanoate (3-isopropylmalate) to 3-carboxy-4-methyl-2-oxopentanoate. The product decarboxylates to 4-methyl-2 oxopentanoate. The polypeptide is 3-isopropylmalate dehydrogenase (Rhizobium johnstonii (strain DSM 114642 / LMG 32736 / 3841) (Rhizobium leguminosarum bv. viciae)).